Consider the following 908-residue polypeptide: DNA (cytosine-5)-methyltransferase 3A (908 aa).

The segment covering 1–13 (MPSSGPGDTSISS) has biased composition (polar residues). 2 disordered regions span residues 1-183 (MPSS…PMPR) and 226-281 (SQAS…PEYE). Residues 14-37 (LEREDDRKEGEEQEENRGKEERQE) are compositionally biased toward basic and acidic residues. The span at 44 to 54 (KVGRPGRKRKH) shows a compositional bias: basic residues. A compositionally biased stretch (polar residues) spans 69 to 80 (TTKSQPTAQDSG). A Phosphoserine modification is found at Ser102. Residues 110-124 (GAPAEGEGTETPPEA) show a composition bias toward low complexity. Thr120 carries the post-translational modification Phosphothreonine. Lys158 is covalently cross-linked (Glycyl lysine isopeptide (Lys-Gly) (interchain with G-Cter in SUMO2)). Residue Arg167 is modified to Omega-N-methylarginine. Residues 195–399 (SKRKRDEWLA…DTGKAVEVQN (205 aa)) form an interaction with DNMT1 and DNMT3B region. Phosphoserine occurs at positions 239 and 251. The span at 242 to 256 (AVQQPTDPASPTVAT) shows a compositional bias: polar residues. Phosphothreonine is present on Thr257. In terms of domain architecture, PWWP spans 257–315 (TPEPVGADAGDKNATKAADDEPEYEDGRGFGIGELVWGKLRGFSWWPGRIVSWWMTGRS). A compositionally biased stretch (basic and acidic residues) spans 265–275 (AGDKNATKAAD). Residues Ser386 and Ser389 each carry the phosphoserine modification. A disordered region spans residues 443 to 462 (AYAPPPPAKKPRKSTTEKPK). In terms of domain architecture, ADD spans 478–610 (EVRQKCRNIE…LQMFFANNHD (133 aa)). Residues 489–519 (ICISCGSLNVTLEHPLFIGGMCQNCKNCFLE) form a GATA-type; atypical zinc finger. Residues 490–582 (CISCGSLNVT…KEDPWNCYMC (93 aa)) are interaction with the PRC2/EED-EZH2 complex. The PHD-type; atypical zinc finger occupies 530 to 586 (QSYCTICCGGREVLMCGNNNCCRCFCVECVDLLVGPGAAQAAIKEDPWNCYMCGHKG). The SAM-dependent MTase C5-type domain maps to 630–908 (IRVLSLFDGI…APLKEYFACV (279 aa)). S-adenosyl-L-methionine contacts are provided by residues 637–641 (DGIAT), Glu660, and 682–684 (DVR). The active site involves Cys706. The residue at position 706 (Cys706) is an S-methylcysteine; by autocatalysis. 887–889 (RSW) serves as a coordination point for S-adenosyl-L-methionine.

The protein belongs to the class I-like SAM-binding methyltransferase superfamily. C5-methyltransferase family. As to quaternary structure, heterotetramer composed of 1 DNMT3A homodimer and 2 DNMT3L subunits (DNMT3L-DNMT3A-DNMT3A-DNMT3L). Interacts with DNMT1 and DNMT3B. Interacts with MPHOSPH8. Interacts with histone H3 that is not methylated at 'Lys-4' (H3K4). Binds the ZBTB18 transcriptional repressor. Interacts with SETDB1. Associates with HDAC1 through its ADD domain. Interacts with UHRF1. Interacts with the PRC2/EED-EZH2 complex. Interacts with UBC9, PIAS1 and PIAS2. Interacts with SPOCD1. Interacts with ZNF263; recruited to the SIX3 promoter along with other proteins involved in chromatin modification and transcriptional corepression where it contributes to transcriptional repression. Post-translationally, sumoylated; sumoylation disrupts the ability to interact with histone deacetylases (HDAC1 and HDAC2) and repress transcription. In terms of processing, auto-methylated at Cys-706: auto-methylation takes place in absence of DNA substrate and inactivates the DNA methyltransferase activity. Inactivation by auto-methylation may be used to inactivate unused DNA methyltransferases in the cell.

The protein resides in the nucleus. It localises to the chromosome. It is found in the cytoplasm. The catalysed reaction is a 2'-deoxycytidine in DNA + S-adenosyl-L-methionine = a 5-methyl-2'-deoxycytidine in DNA + S-adenosyl-L-homocysteine + H(+). It catalyses the reaction L-cysteinyl-[protein] + S-adenosyl-L-methionine = S-methyl-L-cysteinyl-[protein] + S-adenosyl-L-homocysteine + H(+). With respect to regulation, activated by binding to the regulatory factor DNMT3L. Auto-methylation at Cys-706 in absence of DNA inactivates the DNA methyltransferase activity. Functionally, required for genome-wide de novo methylation and is essential for the establishment of DNA methylation patterns during development. DNA methylation is coordinated with methylation of histones. It modifies DNA in a non-processive manner and also methylates non-CpG sites. May preferentially methylate DNA linker between 2 nucleosomal cores and is inhibited by histone H1. Plays a role in paternal and maternal imprinting. Required for methylation of most imprinted loci in germ cells. Acts as a transcriptional corepressor for ZBTB18. Recruited to trimethylated 'Lys-36' of histone H3 (H3K36me3) sites. Can actively repress transcription through the recruitment of HDAC activity. Also has weak auto-methylation activity on Cys-706 in absence of DNA. This chain is DNA (cytosine-5)-methyltransferase 3A (Dnmt3a), found in Rattus norvegicus (Rat).